Reading from the N-terminus, the 329-residue chain is Phenylalanine--tRNA ligase alpha subunit (329 aa).

Glu-254 serves as a coordination point for Mg(2+).

This sequence belongs to the class-II aminoacyl-tRNA synthetase family. Phe-tRNA synthetase alpha subunit type 1 subfamily. In terms of assembly, tetramer of two alpha and two beta subunits. The cofactor is Mg(2+).

It localises to the cytoplasm. It catalyses the reaction tRNA(Phe) + L-phenylalanine + ATP = L-phenylalanyl-tRNA(Phe) + AMP + diphosphate + H(+). The sequence is that of Phenylalanine--tRNA ligase alpha subunit from Actinobacillus succinogenes (strain ATCC 55618 / DSM 22257 / CCUG 43843 / 130Z).